The chain runs to 392 residues: Putative cystathionine gamma-lyase 2 (392 aa).

Residues leucine 32–proline 55 are disordered. The segment covering asparagine 40–serine 50 has biased composition (basic and acidic residues). Arginine 51, tyrosine 103, and arginine 108 together coordinate substrate. Lysine 203 is subject to N6-(pyridoxal phosphate)lysine. Glutamate 330 contributes to the substrate binding site.

Belongs to the trans-sulfuration enzymes family. Pyridoxal 5'-phosphate is required as a cofactor.

The protein resides in the cytoplasm. The enzyme catalyses L,L-cystathionine + H2O = 2-oxobutanoate + L-cysteine + NH4(+). It functions in the pathway amino-acid biosynthesis; L-cysteine biosynthesis; L-cysteine from L-homocysteine and L-serine: step 2/2. The sequence is that of Putative cystathionine gamma-lyase 2 (cth-2) from Caenorhabditis elegans.